An 85-amino-acid polypeptide reads, in one-letter code: Sec-independent protein translocase protein TatA (85 aa).

The helical transmembrane segment at 1–21 (MGSMSIWHWLVVGVLVLLLFG) threads the bilayer. The segment at 39–85 (FKKGMSEEDEPTQPAEPRPTPRLQQQPPIEPNADPKLQPMQDDRPQH) is disordered.

Belongs to the TatA/E family. In terms of assembly, the Tat system comprises two distinct complexes: a TatABC complex, containing multiple copies of TatA, TatB and TatC subunits, and a separate TatA complex, containing only TatA subunits. Substrates initially bind to the TatABC complex, which probably triggers association of the separate TatA complex to form the active translocon.

It is found in the cell inner membrane. In terms of biological role, part of the twin-arginine translocation (Tat) system that transports large folded proteins containing a characteristic twin-arginine motif in their signal peptide across membranes. TatA could form the protein-conducting channel of the Tat system. The sequence is that of Sec-independent protein translocase protein TatA from Rhizorhabdus wittichii (strain DSM 6014 / CCUG 31198 / JCM 15750 / NBRC 105917 / EY 4224 / RW1) (Sphingomonas wittichii).